A 337-amino-acid polypeptide reads, in one-letter code: MAIDVFYDDDADLSIIQGRKVAIIGYGSQGHAHAQNLRESGVEVAIGLREGSKSREKAEEAGFKVLNNAEASEWADVIMLLAPDTSQAQIYENDIAPNLKDGDALFFGHGLNIHFGMIKPEDNITIGMVAPKGPGHLVRRQYVDGKGVPCLIAVEQDPKGNGRDLALSYAAAIGGGRAGVIPTTFEAETVTDLFGEQAVLCGGTEELIKTGFEVLVEAGYEPEMAYFECLHELKLIVDLIFEGGIKNMNYSVSDTAEFGGYISGPRVIDADTKERMKGILSDIQDGTFTKRLVANVEGGNKELEELRASYNDHEIEKTGEKLRDLMSWVKNPLNETA.

Residues 3–183 (IDVFYDDDAD…GGGRAGVIPT (181 aa)) form the KARI N-terminal Rossmann domain. NADP(+) is bound by residues 26–29 (YGSQ), arginine 49, serine 52, serine 54, and 84–87 (DTSQ). Histidine 109 is an active-site residue. Glycine 135 is a binding site for NADP(+). Residues 184–329 (TFEAETVTDL…EKLRDLMSWV (146 aa)) form the KARI C-terminal knotted domain. The Mg(2+) site is built by aspartate 192, glutamate 196, glutamate 228, and glutamate 232. Serine 253 contacts substrate.

The protein belongs to the ketol-acid reductoisomerase family. It depends on Mg(2+) as a cofactor.

It carries out the reaction (2R)-2,3-dihydroxy-3-methylbutanoate + NADP(+) = (2S)-2-acetolactate + NADPH + H(+). It catalyses the reaction (2R,3R)-2,3-dihydroxy-3-methylpentanoate + NADP(+) = (S)-2-ethyl-2-hydroxy-3-oxobutanoate + NADPH + H(+). It functions in the pathway amino-acid biosynthesis; L-isoleucine biosynthesis; L-isoleucine from 2-oxobutanoate: step 2/4. Its pathway is amino-acid biosynthesis; L-valine biosynthesis; L-valine from pyruvate: step 2/4. Involved in the biosynthesis of branched-chain amino acids (BCAA). Catalyzes an alkyl-migration followed by a ketol-acid reduction of (S)-2-acetolactate (S2AL) to yield (R)-2,3-dihydroxy-isovalerate. In the isomerase reaction, S2AL is rearranged via a Mg-dependent methyl migration to produce 3-hydroxy-3-methyl-2-ketobutyrate (HMKB). In the reductase reaction, this 2-ketoacid undergoes a metal-dependent reduction by NADPH to yield (R)-2,3-dihydroxy-isovalerate. This chain is Ketol-acid reductoisomerase (NADP(+)), found in Corynebacterium urealyticum (strain ATCC 43042 / DSM 7109).